The sequence spans 1060 residues: Protocadherin-1 (1060 aa).

Residues 1–57 form the signal peptide; it reads MDSGAGGRRCPEAALLILGPPRMEHLRHSPGPGGQRLLLPSMLLALLLLLAPSPGHA. Cadherin domains are found at residues 58 to 168, 169 to 280, 281 to 387, 396 to 506, 507 to 612, 613 to 715, and 718 to 844; these read TRVV…TPNF, ASPV…APKF, ERPS…APTI, THQD…APVF, TQSV…DPKF, MLSG…APYI, and PSNT…DPEY. The Extracellular segment spans residues 58–852; it reads TRVVYKVPEE…EYERSKQRGN (795 aa). Asn-305 and Asn-403 each carry an N-linked (GlcNAc...) asparagine glycan. Residues Asn-618, Asn-662, Asn-813, and Asn-818 are each glycosylated (N-linked (GlcNAc...) asparagine). A helical membrane pass occupies residues 853 to 873; sequence ILFGVVAGVVAVALLIALAVL. The Cytoplasmic segment spans residues 874 to 1060; sequence VRYCRQREAK…HGAIWTEVWE (187 aa). Positions 884–897 are enriched in basic and acidic residues; that stretch reads SGYQAGKKETKDLY. Residues 884 to 1045 form a disordered region; that stretch reads SGYQAGKKET…QPFQLSTPQP (162 aa). A compositionally biased stretch (basic residues) spans 907–920; sequence KGNKSKGKKSKSPK. Residues Ser-918, Ser-949, Ser-962, and Ser-984 each carry the phosphoserine modification. The segment covering 973-986 has biased composition (low complexity); sequence SPLPSIQLQPQSPS. Polar residues-rich tracts occupy residues 1003–1024 and 1033–1043; these read FVGTGDTTSTGSEQYSDYSYRT and QVGQPFQLSTP.

As to expression, highly expressed in the brain and neuro-glial cells.

It localises to the cell junction. Its subcellular location is the cell membrane. May be involved in cell-cell interaction processes and in cell adhesion. The sequence is that of Protocadherin-1 (PCDH1) from Homo sapiens (Human).